Consider the following 836-residue polypeptide: Serine/threonine-protein kinase 1 (836 aa).

Basic residues predominate over residues Met1–Arg12. The interval Met1–Asp244 is disordered. Positions Ser28–Lys40 are enriched in basic and acidic residues. Composition is skewed to acidic residues over residues Asp64 to Ser75, Asp95 to Gly105, and Glu145 to Asp163. The span at Met224–Asp238 shows a compositional bias: polar residues. The Protein kinase domain maps to Tyr249–Val503. Residues Leu255 to Val263 and Lys278 each bind ATP. The Proton acceptor role is filled by Asp371. Disordered regions lie at residues Leu539–Thr571, Glu600–Ile640, and Thr760–Pro780. Residues Pro562–Thr571 are compositionally biased toward polar residues. Residues Ser606–Ser618 are compositionally biased toward basic and acidic residues.

The protein belongs to the protein kinase superfamily. STE Ser/Thr protein kinase family. STE20 subfamily. Interacts with MOB1A and MOB1B via its N-terminal region at the plasma membrane and in the nucleus. Binds to BIK1 to phosphorylate and stabilize it. Interacts with and phosphorylates RBOHD upon flagellin perception to activate it. Mn(2+) is required as a cofactor. Post-translationally, autophosphorylates. As to expression, mostly expressed in mature tissues of roots, shoots, hypocotyls, cotyledons, stems, leaves and flowers, as well as in the shoot apical meristem (SAM).

It is found in the cell membrane. The protein localises to the nucleus. Its subcellular location is the golgi apparatus. It localises to the trans-Golgi network. The protein resides in the early endosome. It catalyses the reaction L-seryl-[protein] + ATP = O-phospho-L-seryl-[protein] + ADP + H(+). The enzyme catalyses L-threonyl-[protein] + ATP = O-phospho-L-threonyl-[protein] + ADP + H(+). Functionally, serine/threonine-protein kinase. Regulates organ size in coordination with MOB1A by modulating cell proliferation and cell expansion, possibly by facilitating cell cycle exit. Positive regulator of the pathogen-associated molecular pattern (PAMP, e.g. flg22)-triggered immunity (PTI) signaling by stabilizing BIK1 and activating RBOHD by phosphorylation to promote the extracellular reactive oxygen species (ROS) burst involved in defense responses to bacterial infection. The sequence is that of Serine/threonine-protein kinase 1 from Arabidopsis thaliana (Mouse-ear cress).